The sequence spans 321 residues: Cytochrome c biogenesis protein CcsA (321 aa).

Helical transmembrane passes span 17–37 (IISI…IVGL), 43–63 (KGMI…WIYS), 71–91 (LYES…VPKI), 143–163 (MLLS…LLVI), 225–245 (VISL…VWAN), 258–273 (ETWA…IYLH), and 286–306 (AIVA…VNLL).

The protein belongs to the CcmF/CycK/Ccl1/NrfE/CcsA family. In terms of assembly, may interact with Ccs1.

The protein localises to the plastid. It is found in the chloroplast thylakoid membrane. In terms of biological role, required during biogenesis of c-type cytochromes (cytochrome c6 and cytochrome f) at the step of heme attachment. This is Cytochrome c biogenesis protein CcsA from Liriodendron tulipifera (Tuliptree).